We begin with the raw amino-acid sequence, 403 residues long: Tyrosine--tRNA ligase (403 aa).

Positions 43-52 match the 'HIGH' region motif; the sequence is PTAPDLHLGH. A 'KMSKS' region motif is present at residues 227 to 231; it reads KMSKS. K230 contacts ATP. The S4 RNA-binding domain maps to 338–399; it reads LPIAQLLKQT…GKRKFARVTI (62 aa).

This sequence belongs to the class-I aminoacyl-tRNA synthetase family. TyrS type 2 subfamily. In terms of assembly, homodimer.

It localises to the cytoplasm. It carries out the reaction tRNA(Tyr) + L-tyrosine + ATP = L-tyrosyl-tRNA(Tyr) + AMP + diphosphate + H(+). In terms of biological role, catalyzes the attachment of tyrosine to tRNA(Tyr) in a two-step reaction: tyrosine is first activated by ATP to form Tyr-AMP and then transferred to the acceptor end of tRNA(Tyr). The chain is Tyrosine--tRNA ligase from Nitrosospira multiformis (strain ATCC 25196 / NCIMB 11849 / C 71).